The chain runs to 210 residues: Large ribosomal subunit protein bL25 (210 aa).

It belongs to the bacterial ribosomal protein bL25 family. CTC subfamily. In terms of assembly, part of the 50S ribosomal subunit; part of the 5S rRNA/L5/L18/L25 subcomplex. Contacts the 5S rRNA. Binds to the 5S rRNA independently of L5 and L18.

Its function is as follows. This is one of the proteins that binds to the 5S RNA in the ribosome where it forms part of the central protuberance. The chain is Large ribosomal subunit protein bL25 from Frankia casuarinae (strain DSM 45818 / CECT 9043 / HFP020203 / CcI3).